Reading from the N-terminus, the 290-residue chain is Glucuronoxylan 4-O-methyltransferase 2 (290 aa).

The chain crosses the membrane as a helical span at residues 8–28 (FISSKLIFICCSILVLFILFL).

Belongs to the methyltransferase superfamily. In terms of tissue distribution, expressed in roots, rosette leaves and stems.

The protein localises to the golgi apparatus membrane. It carries out the reaction glucuronoxylan D-glucuronate + n S-adenosyl-L-methionine = glucuronoxylan 4-O-methyl-D-glucuronate + n S-adenosyl-L-homocysteine + n H(+). Methyltransferase catalyzing 4-O-methylation of glucuronic acid side chains on xylan. The sequence is that of Glucuronoxylan 4-O-methyltransferase 2 (GXM2) from Arabidopsis thaliana (Mouse-ear cress).